The sequence spans 425 residues: MVSLTDLFLASLLVPTSPWLCLPPRIDTIDQRGGRVTLKQVRNPRGHKAFNPARATYRTFLKYGVPAPDYIKKAVAHIDEEQEEAFARIKRDTGSAAAIPINEVDIAYVTPVTIGTPPQTLMLDLDTGSSDLWVFSSLTPSNQVRGQEIYSPTKSSTSKLLSGHTWSIRYGDGSGSRGTVYTDNFTIGGLEVKSQAVQAALEVSSMLTQEQSLDGLVGLGFSALNTVRPSSQLTFFDNARPNLDEEVFTADLKYHATGSYDFGFIDSKKYAGNITYTAVQQSPGYWTHSLSGYSVGSGAFQASQISGISDTGTTLLYLPTAIVTAYYRQVQGAQNSQYYGGYVFPCSSTLPTFTFGIEGARFTIPASYINYTRISPTSTTCYGGLQSSSGLGINIFGDVALKRAFVVFSGTNPPRIGFAIKPLAS.

The signal sequence occupies residues 1 to 28; that stretch reads MVSLTDLFLASLLVPTSPWLCLPPRIDT. Positions 29–91 are cleaved as a propeptide — activation peptide; it reads IDQRGGRVTL…QEEAFARIKR (63 aa). A Peptidase A1 domain is found at 108–419; the sequence is YVTPVTIGTP…GTNPPRIGFA (312 aa). Asp-126 is a catalytic residue. Asn-184 and Asn-273 each carry an N-linked (GlcNAc...) asparagine glycan. Asp-310 is an active-site residue. Cys-346 and Cys-381 are joined by a disulfide. Residue Asn-370 is glycosylated (N-linked (GlcNAc...) asparagine).

This sequence belongs to the peptidase A1 family.

In Podospora anserina (Pleurage anserina), this protein is Podosporapepsin (PAPA).